The chain runs to 289 residues: Phospholipase C (289 aa).

Positions 1–25 are cleaved as a signal peptide; the sequence is MKFKKVVLGMCLIASVLVFPVTIKA. Positions 26 to 51 are excised as a propeptide; it reads NACCDEYLQTPAAPHDIDSKLPHKLS. W52, H65, D106, H120, H169, D173, H179, H193, and E197 together coordinate Zn(2+). Residues 52 to 289 enclose the Zn-dependent PLC domain; the sequence is WSADNPTNTD…LEFWSKKTNE (238 aa).

This sequence belongs to the bacterial zinc-metallophospholipase C family. In terms of assembly, forms monomers, dimers and higher order oligomers, but only the monomer is enzymatically active. Requires Zn(2+) as cofactor.

It localises to the secreted. The catalysed reaction is a 1,2-diacyl-sn-glycero-3-phosphocholine + H2O = phosphocholine + a 1,2-diacyl-sn-glycerol + H(+). It catalyses the reaction 1,2-dihexadecanoyl-sn-glycero-3-phosphocholine + H2O = 1,2-dihexadecanoyl-sn-glycerol + phosphocholine + H(+). It carries out the reaction 1-hexadecanoyl-2-(9Z-octadecenoyl)-sn-glycero-3-phosphocholine + H2O = 1-hexadecanoyl-2-(9Z-octadecenoyl)-sn-glycerol + phosphocholine + H(+). The enzyme catalyses 1,2-di-(9Z-octadecenoyl)-sn-glycero-3-phosphocholine + H2O = 1,2-di-(9Z-octadecenoyl)-sn-glycerol + phosphocholine + H(+). The catalysed reaction is a 1,2-diacyl-sn-glycero-3-phosphoethanolamine + H2O = phosphoethanolamine + a 1,2-diacyl-sn-glycerol + H(+). It catalyses the reaction 1,2-di-(9Z-octadecenoyl)-sn-glycero-3-phosphoethanolamine + H2O = phosphoethanolamine + 1,2-di-(9Z-octadecenoyl)-sn-glycerol + H(+). It carries out the reaction 1,2-dihexadecanoyl-sn-glycero-3-phosphoethanolamine + H2O = 1,2-dihexadecanoyl-sn-glycerol + phosphoethanolamine + H(+). The enzyme catalyses a 1,2-diacyl-sn-glycero-3-phospho-L-serine + H2O = O-phospho-L-serine + a 1,2-diacyl-sn-glycerol + H(+). The catalysed reaction is a 1,2-diacyl-sn-glycero-3-phosphoglycerol + H2O = glycerol 1-phosphate + a 1,2-diacyl-sn-glycerol + H(+). It catalyses the reaction a 1,2-diacyl-sn-glycero-3-phospho-(1D-myo-inositol) + H2O = 1D-myo-inositol 1-phosphate + a 1,2-diacyl-sn-glycerol + H(+). It carries out the reaction a sphingomyelin + H2O = phosphocholine + an N-acylsphing-4-enine + H(+). The enzyme catalyses a 1-O-(1Z-alkenyl)-2-acyl-sn-glycero-3-phosphoethanolamine + H2O = a 1-O-(1Z-alkenyl)-2-acyl-sn-glycerol + phosphoethanolamine + H(+). With respect to regulation, enzymatic activity of LmPC-PLC can be specifically inhibited by its propeptide added in trans. The tendency of the enzyme to oligomerize, which appears to largely attenuate the enzymatic activity, may be one of the mechanisms regulating phospholipase activity in the host cell during the different steps of the infection cycle of L.monocytogenes. Enzyme activity is inhibited by EDTA and o-phenanthroline in vitro. Functionally, major virulence factor whose phospholipase activity facilitates pore formation by the pore-forming toxin listeriolysin O (LLO), leading to vacuolar membrane disruption and vacuolar escape of L.monocytogenes, which enables the bacterium to spread in the host. Acts as a phospholipase C exhibiting broad substrate specificity, with the highest activities towards diacylglycerophospholipids with phosphocholine, phosphoserine, and phosphoethanolamine head groups, but less towards phosphoglycerol or phosphoinositol head groups. Is also able to hydrolyze sphingomyelin and plasmenylethanolamine. The protein is Phospholipase C of Listeria monocytogenes serovar 1/2a (strain ATCC BAA-679 / EGD-e).